Here is a 788-residue protein sequence, read N- to C-terminus: Pyridoxal-dependent decarboxylase domain-containing protein 1 (788 aa).

Over residues 28–40 (EDSQRRTEEENGK) the composition is skewed to basic and acidic residues. Residues 28–51 (EDSQRRTEEENGKKLISGDIPGPL) form a disordered region. At T414 the chain carries Phosphothreonine. S652 bears the Phosphoserine mark. The disordered stretch occupies residues 684–788 (AGVTLPPTPS…SQVEGPESLR (105 aa)). Residues T687 and T691 each carry the phosphothreonine modification. 3 positions are modified to phosphoserine: S710, S718, and S722. Over residues 725-734 (HIEDLEKVER) the composition is skewed to basic and acidic residues. Residues 738–750 (GPEQITLEASSTE) show a composition bias toward polar residues. 4 positions are modified to phosphoserine: S748, S757, S779, and S786. Basic and acidic residues predominate over residues 772 to 788 (PHPEDDHSQVEGPESLR).

This sequence belongs to the group II decarboxylase family. Requires pyridoxal 5'-phosphate as cofactor.

The sequence is that of Pyridoxal-dependent decarboxylase domain-containing protein 1 (PDXDC1) from Homo sapiens (Human).